A 176-amino-acid chain; its full sequence is Probable DNA-directed RNA polymerase subunit delta (176 aa).

The HTH HARE-type domain maps to 14–81 (KSFIDMAYTL…GENLWGLRDW (68 aa)). A disordered region spans residues 114 to 176 (LGEDEMDDDD…VFEDEEDFND (63 aa)). Composition is skewed to acidic residues over residues 116–145 (EDEM…QVEE) and 153–176 (VIEE…DFND).

The protein belongs to the RpoE family. RNAP is composed of a core of 2 alpha, a beta and a beta' subunits. The core is associated with a delta subunit and one of several sigma factors.

Participates in both the initiation and recycling phases of transcription. In the presence of the delta subunit, RNAP displays an increased specificity of transcription, a decreased affinity for nucleic acids, and an increased efficiency of RNA synthesis because of enhanced recycling. This is Probable DNA-directed RNA polymerase subunit delta from Staphylococcus aureus (strain JH1).